The chain runs to 360 residues: MNSPLRGIWLWLPLLLTWLTPEVSSSWWYMGATGGSSRVMCDNVPGLVSSQRQLCHRHPDVMRAIGLGVTEWTSECQYQFRQHRWNCNTLDRDHSLFGRVLLRSSRESAFVYAISSAGVVFAVTRACSQGEVKSCSCDPKKMGSGKDSKGVFDWGGCSDNIDYGIKFARAFVDAKERKGKDARALMNLHNNRAGRKSVKRFLKQECKCHGVSGSCSLRTCWLAMADFRKTGDYLWRKYNGAIQVVMNQDGTGFTVANERFKKPTKNDLVYFENSPDYCIRDRETGSLGTAGRVCNLTSRGMDSCEVMCCGRGYDTSHVTRMIKCGCKFHWCCAVRCQDCLEALDVHTCKAPKNADWKSPT.

The signal sequence occupies residues 1–25; sequence MNSPLRGIWLWLPLLLTWLTPEVSS. Cystine bridges form between C76–C87, C127–C135, C137–C157, C206–C220, C208–C215, C278–C309, C294–C304, C308–C348, C324–C339, C326–C336, and C331–C332. S212 carries O-palmitoleoyl serine; by PORCN lipidation. N-linked (GlcNAc...) asparagine glycosylation is present at N295.

It belongs to the Wnt family. Post-translationally, palmitoleoylation is required for efficient binding to frizzled receptors. Depalmitoleoylation leads to Wnt signaling pathway inhibition.

Its subcellular location is the secreted. The protein localises to the extracellular space. The protein resides in the extracellular matrix. Ligand for members of the frizzled family of seven transmembrane receptors. Functions in the canonical Wnt signaling pathway that results in activation of transcription factors of the TCF/LEF family. Functions as a upstream regulator of FGF10 expression. Plays an important role in embryonic lung development. May contribute to embryonic brain development by regulating the proliferation of dopaminergic precursors and neurons. The protein is Protein Wnt-2 (WNT2) of Callithrix jacchus (White-tufted-ear marmoset).